A 185-amino-acid chain; its full sequence is Non-structural protein 7a (185 aa).

The N-terminal stretch at 1 to 16 (MRFFLLLCFFLPCFQA) is a signal peptide.

The chain is Non-structural protein 7a from Rousettus leschenaultii (Leschenault's rousette).